We begin with the raw amino-acid sequence, 351 residues long: Transcriptional activator POG1 (351 aa).

The span at 1 to 26 (MKQEPHRQSEEKEKPKGPMAVEREQH) shows a compositional bias: basic and acidic residues. Positions 1–56 (MKQEPHRQSEEKEKPKGPMAVEREQHTSLSSGTTVTASTGDESTNSRPVESSQTEK) are disordered. Positions 27 to 56 (TSLSSGTTVTASTGDESTNSRPVESSQTEK) are enriched in polar residues. A phosphoserine mark is found at Ser152 and Ser168. Disordered regions lie at residues 234-256 (PGMG…TPVM) and 291-351 (QHQL…PPPT). The span at 241-256 (QLPTMSSNSESQTPVM) shows a compositional bias: polar residues. Ser314 bears the Phosphoserine mark.

This sequence belongs to the POG1 family. In terms of processing, phosphorylated by CDC28.

The protein localises to the nucleus. Transcriptional activator which promotes cell cycle recovery with CLN2, after pheromone induced G1 arrest, probably inhibiting the ability of STE20 to activate the pheromone response pathway. Binds the promoters of genes that function in cell cycle regulation, cytoskeletal organization, and spindle assembly. May also be involved in stress-resistance. The protein is Transcriptional activator POG1 (POG1) of Saccharomyces cerevisiae (strain ATCC 204508 / S288c) (Baker's yeast).